The primary structure comprises 265 residues: 3-deoxy-manno-octulosonate cytidylyltransferase 2 (265 aa).

It belongs to the KdsB family.

Its subcellular location is the cytoplasm. It catalyses the reaction 3-deoxy-alpha-D-manno-oct-2-ulosonate + CTP = CMP-3-deoxy-beta-D-manno-octulosonate + diphosphate. It functions in the pathway nucleotide-sugar biosynthesis; CMP-3-deoxy-D-manno-octulosonate biosynthesis; CMP-3-deoxy-D-manno-octulosonate from 3-deoxy-D-manno-octulosonate and CTP: step 1/1. It participates in bacterial outer membrane biogenesis; lipopolysaccharide biosynthesis. Activates KDO (a required 8-carbon sugar) for incorporation into bacterial lipopolysaccharide in Gram-negative bacteria. The chain is 3-deoxy-manno-octulosonate cytidylyltransferase 2 from Burkholderia lata (strain ATCC 17760 / DSM 23089 / LMG 22485 / NCIMB 9086 / R18194 / 383).